The following is a 472-amino-acid chain: Probable glycine dehydrogenase (decarboxylating) subunit 2 (472 aa).

K268 bears the N6-(pyridoxal phosphate)lysine mark.

This sequence belongs to the GcvP family. C-terminal subunit subfamily. In terms of assembly, the glycine cleavage system is composed of four proteins: P, T, L and H. In this organism, the P 'protein' is a heterodimer of two subunits. Pyridoxal 5'-phosphate is required as a cofactor.

The catalysed reaction is N(6)-[(R)-lipoyl]-L-lysyl-[glycine-cleavage complex H protein] + glycine + H(+) = N(6)-[(R)-S(8)-aminomethyldihydrolipoyl]-L-lysyl-[glycine-cleavage complex H protein] + CO2. Functionally, the glycine cleavage system catalyzes the degradation of glycine. The P protein binds the alpha-amino group of glycine through its pyridoxal phosphate cofactor; CO(2) is released and the remaining methylamine moiety is then transferred to the lipoamide cofactor of the H protein. This Thermoplasma volcanium (strain ATCC 51530 / DSM 4299 / JCM 9571 / NBRC 15438 / GSS1) protein is Probable glycine dehydrogenase (decarboxylating) subunit 2.